A 183-amino-acid polypeptide reads, in one-letter code: Peptide deformylase (183 aa).

Cys-111 and His-154 together coordinate Fe cation. Glu-155 is a catalytic residue. His-158 contacts Fe cation.

Belongs to the polypeptide deformylase family. The cofactor is Fe(2+).

The enzyme catalyses N-terminal N-formyl-L-methionyl-[peptide] + H2O = N-terminal L-methionyl-[peptide] + formate. Its function is as follows. Removes the formyl group from the N-terminal Met of newly synthesized proteins. Requires at least a dipeptide for an efficient rate of reaction. N-terminal L-methionine is a prerequisite for activity but the enzyme has broad specificity at other positions. The sequence is that of Peptide deformylase from Staphylococcus aureus (strain COL).